The sequence spans 253 residues: Polyhedrin (253 aa).

Functionally, major component of the virus occlusion bodies, which are large proteinaceous structures (polyhedra), that protect the virus from the outside environment for extended periods until they are ingested by insect larvae. In Orgyia pseudotsugata cypovirus (OpCPV), this protein is Polyhedrin.